We begin with the raw amino-acid sequence, 220 residues long: Large ribosomal subunit protein uL10c (220 aa).

Residues 1–41 (MEVALLSFSSSLSPLCHQRISTLTPKTSNSPNYPRLPVIRS) constitute a chloroplast transit peptide.

The protein belongs to the universal ribosomal protein uL10 family. As to quaternary structure, part of the 50S ribosomal subunit.

It is found in the plastid. Its subcellular location is the chloroplast. In terms of biological role, this protein binds directly to 23S ribosomal RNA. This chain is Large ribosomal subunit protein uL10c (RPL10), found in Arabidopsis thaliana (Mouse-ear cress).